The primary structure comprises 162 residues: NADH-quinone oxidoreductase subunit I (162 aa).

4Fe-4S ferredoxin-type domains follow at residues 53-83 and 93-122; these read LRRY…IDSE and TRYD…ETRI. 8 residues coordinate [4Fe-4S] cluster: Cys63, Cys66, Cys69, Cys73, Cys102, Cys105, Cys108, and Cys112.

The protein belongs to the complex I 23 kDa subunit family. NDH-1 is composed of 14 different subunits. Subunits NuoA, H, J, K, L, M, N constitute the membrane sector of the complex. [4Fe-4S] cluster is required as a cofactor.

It localises to the cell inner membrane. The enzyme catalyses a quinone + NADH + 5 H(+)(in) = a quinol + NAD(+) + 4 H(+)(out). Functionally, NDH-1 shuttles electrons from NADH, via FMN and iron-sulfur (Fe-S) centers, to quinones in the respiratory chain. The immediate electron acceptor for the enzyme in this species is believed to be ubiquinone. Couples the redox reaction to proton translocation (for every two electrons transferred, four hydrogen ions are translocated across the cytoplasmic membrane), and thus conserves the redox energy in a proton gradient. The chain is NADH-quinone oxidoreductase subunit I from Thiobacillus denitrificans (strain ATCC 25259 / T1).